The chain runs to 869 residues: Structure-specific endonuclease subunit SLX4 (869 aa).

Residues 40 to 59 (SPLSLPSPTSLLDFLSTSTS) show a composition bias toward low complexity. Disordered regions lie at residues 40 to 79 (SPLS…EVLD), 92 to 116 (NRVV…ESPG), 165 to 199 (KANQ…INDL), 293 to 323 (GLSD…NPPK), 351 to 388 (TLLS…KKNE), 418 to 437 (ANGH…HISN), and 630 to 774 (KTSN…ASET). Residues 63-79 (ARSDTDGDKTQGKEVLD) show a composition bias toward basic and acidic residues. 2 stretches are compositionally biased toward polar residues: residues 165–174 (KANQTVSLQP) and 294–311 (LSDS…SATS). Residues 312–322 (KPRRVKAKNPP) show a composition bias toward basic residues. 2 stretches are compositionally biased toward polar residues: residues 647–657 (VDESTQGQSLG) and 664–673 (SIPQTATTQV). Residues 688 to 700 (VPVPSRRSTSTSK) show a composition bias toward low complexity. Residues 765–774 (IPSTGTASET) are compositionally biased toward polar residues.

Belongs to the SLX4 family. As to quaternary structure, forms a heterodimer with SLX1. Phosphorylated in response to DNA damage.

It is found in the nucleus. Functionally, regulatory subunit of the SLX1-SLX4 structure-specific endonuclease that resolves DNA secondary structures generated during DNA repair and recombination. Has endonuclease activity towards branched DNA substrates, introducing single-strand cuts in duplex DNA close to junctions with ss-DNA. The sequence is that of Structure-specific endonuclease subunit SLX4 from Paracoccidioides brasiliensis (strain Pb18).